Consider the following 305-residue polypeptide: P2Y purinoceptor 14 (305 aa).

Residues 1–29 (MDNTTTTEPPKQPCTRNTLITQQIIPMLY) are Extracellular-facing. A glycan (N-linked (GlcNAc...) asparagine) is linked at Asn3. Residues 30–50 (CVVFITGVLLNGISGWIFFYV) traverse the membrane as a helical segment. The Cytoplasmic segment spans residues 51-55 (PSSKS). Residues 56–76 (FIIYLKNIVVADFLMGLTFPF) traverse the membrane as a helical segment. At 77-96 (KVLSDSGLGPWQLNVFVFRV) the chain is on the extracellular side. A helical transmembrane segment spans residues 97–117 (SAVIFYVNMYVSIAFFGLISF). The Cytoplasmic segment spans residues 118 to 139 (DRYYKIVKPLLVSIVQSVNYSK). The helical transmembrane segment at 140–160 (VLSVLVWVLMLLLAVPNIILT) threads the bilayer. Asn161 is a glycosylation site (N-linked (GlcNAc...) asparagine). Over 161–188 (NQSVKDVTNIQCMELKNELGRKWHKASN) the chain is Extracellular. The helical transmembrane segment at 189-209 (YVFVSIFWIVFLLLTVFYMAI) threads the bilayer. Residues 210–234 (TRKIFKSHLKSRKNSISVKRKSSRN) are Cytoplasmic-facing. Residues 235 to 255 (IFSIVLAFVACFAPYHVARIP) form a helical membrane-spanning segment. The Extracellular portion of the chain corresponds to 256 to 278 (YTKSQTEGHYSCQAKETLLYTKE). The chain crosses the membrane as a helical span at residues 279 to 299 (FTLLLSAANVCLDPISISSYA). The Cytoplasmic segment spans residues 300–305 (SRLEKS).

The protein belongs to the G-protein coupled receptor 1 family.

The protein resides in the cell membrane. In terms of biological role, receptor for UDP-glucose coupled to G-proteins. The sequence is that of P2Y purinoceptor 14 (P2ry14) from Rattus norvegicus (Rat).